Here is a 393-residue protein sequence, read N- to C-terminus: Lipoyl synthase, mitochondrial (393 aa).

[4Fe-4S] cluster-binding residues include Cys-115, Cys-120, Cys-126, Cys-146, Cys-150, Cys-153, and Ser-362. The region spanning 131–351 (ETGTATATIM…RILGMDMGFR (221 aa)) is the Radical SAM core domain.

It belongs to the radical SAM superfamily. Lipoyl synthase family. [4Fe-4S] cluster is required as a cofactor.

It is found in the mitochondrion. It catalyses the reaction [[Fe-S] cluster scaffold protein carrying a second [4Fe-4S](2+) cluster] + N(6)-octanoyl-L-lysyl-[protein] + 2 oxidized [2Fe-2S]-[ferredoxin] + 2 S-adenosyl-L-methionine + 4 H(+) = [[Fe-S] cluster scaffold protein] + N(6)-[(R)-dihydrolipoyl]-L-lysyl-[protein] + 4 Fe(3+) + 2 hydrogen sulfide + 2 5'-deoxyadenosine + 2 L-methionine + 2 reduced [2Fe-2S]-[ferredoxin]. It participates in protein modification; protein lipoylation via endogenous pathway; protein N(6)-(lipoyl)lysine from octanoyl-[acyl-carrier-protein]: step 2/2. In terms of biological role, catalyzes the radical-mediated insertion of two sulfur atoms into the C-6 and C-8 positions of the octanoyl moiety bound to the lipoyl domains of lipoate-dependent enzymes, thereby converting the octanoylated domains into lipoylated derivatives. The chain is Lipoyl synthase, mitochondrial from Vitis vinifera (Grape).